A 154-amino-acid polypeptide reads, in one-letter code: uncharacterized protein (154 aa).

The a divalent metal cation site is built by His-47, His-127, and His-131. At Tyr-150 the chain carries Phosphotyrosine.

The protein belongs to the DinB family. Homodimer.

This is an uncharacterized protein from Bacillus subtilis (strain 168).